The following is a 315-amino-acid chain: Ribosomal RNA small subunit methyltransferase H (315 aa).

S-adenosyl-L-methionine contacts are provided by residues glycine 37–histidine 39, aspartate 57, phenylalanine 83, aspartate 105, and glutamine 112.

The protein belongs to the methyltransferase superfamily. RsmH family.

It localises to the cytoplasm. It carries out the reaction cytidine(1402) in 16S rRNA + S-adenosyl-L-methionine = N(4)-methylcytidine(1402) in 16S rRNA + S-adenosyl-L-homocysteine + H(+). In terms of biological role, specifically methylates the N4 position of cytidine in position 1402 (C1402) of 16S rRNA. The sequence is that of Ribosomal RNA small subunit methyltransferase H from Pseudomonas putida (strain ATCC 47054 / DSM 6125 / CFBP 8728 / NCIMB 11950 / KT2440).